Reading from the N-terminus, the 154-residue chain is 6,7-dimethyl-8-ribityllumazine synthase (154 aa).

Residues F22, 56 to 58 (SFE), and 81 to 83 (VLI) contribute to the 5-amino-6-(D-ribitylamino)uracil site. 86–87 (ET) is a binding site for (2S)-2-hydroxy-3-oxobutyl phosphate. The active-site Proton donor is H89. F114 provides a ligand contact to 5-amino-6-(D-ribitylamino)uracil. Residue R128 coordinates (2S)-2-hydroxy-3-oxobutyl phosphate.

Belongs to the DMRL synthase family.

The enzyme catalyses (2S)-2-hydroxy-3-oxobutyl phosphate + 5-amino-6-(D-ribitylamino)uracil = 6,7-dimethyl-8-(1-D-ribityl)lumazine + phosphate + 2 H2O + H(+). It functions in the pathway cofactor biosynthesis; riboflavin biosynthesis; riboflavin from 2-hydroxy-3-oxobutyl phosphate and 5-amino-6-(D-ribitylamino)uracil: step 1/2. Its function is as follows. Catalyzes the formation of 6,7-dimethyl-8-ribityllumazine by condensation of 5-amino-6-(D-ribitylamino)uracil with 3,4-dihydroxy-2-butanone 4-phosphate. This is the penultimate step in the biosynthesis of riboflavin. The chain is 6,7-dimethyl-8-ribityllumazine synthase from Chlamydia felis (strain Fe/C-56) (Chlamydophila felis).